We begin with the raw amino-acid sequence, 781 residues long: Catenin beta-1 (781 aa).

Ala-2 is modified (N-acetylalanine). The tract at residues 2 to 23 is interaction with VCL; sequence ATQADLMELDMAMEPDRKAAVS. Ser-23 is subject to Phosphoserine; by GSK3-beta; alternate. An O-linked (GlcNAc) serine; alternate glycan is attached at Ser-23. Phosphoserine; by GSK3-beta is present on Ser-29. 2 positions are modified to phosphoserine; by GSK3-beta and HIPK2: Ser-33 and Ser-37. Residues 34 to 57 form a disordered region; it reads GIHSGATTTAPSLSGKGNPEEEDV. Thr-41 carries the phosphothreonine; by GSK3-beta modification. Residue Ser-45 is modified to Phosphoserine. Position 49 is an N6-acetyllysine (Lys-49). Position 64 is a phosphotyrosine; by PTK6 (Tyr-64). Tyr-142 carries the phosphotyrosine; by FYN and PTK6 modification. ARM repeat units follow at residues 151 to 191, 193 to 234, 235 to 276, 277 to 318, 319 to 360, 361 to 389, 400 to 441, 442 to 484, 489 to 530, 531 to 571, 594 to 636, and 637 to 666; these read RAIP…IMRS, QMVS…IFKS, GGIP…VRLA, GGLQ…ILAS, GGPQ…IVEA, GGMQALGLHLTDPSQRLVQNCLWTLRNLS, GLLG…VCQV, GGIE…AQNA, YGLP…LREQ, GAIP…EIVE, NTIP…AEGA, and TAPLTELLHSRNEGVATYAAAVLFRMSEDK. The interaction with BCL9 stretch occupies residues 156–178; it reads LTKLLNDEDQVVVNKAAVMVHQL. Position 191 is a phosphoserine (Ser-191). A Phosphoserine; by CDK5 modification is found at Ser-246. A phosphotyrosine mark is found at Tyr-331 and Tyr-333. Ser-552 carries the phosphoserine; by AMPK modification. Thr-556 carries the phosphothreonine modification. Cys-619 carries the post-translational modification S-nitrosocysteine. At Ser-675 the chain carries Phosphoserine. The disordered stretch occupies residues 720 to 781; sequence HSGGYGQDAL…NQLAWFDTDL (62 aa). The segment covering 734 to 745 has biased composition (basic and acidic residues); that stretch reads MMEHEMGGHHPG. Residues 772–781 are interaction with SCRIB; that stretch reads NQLAWFDTDL.

The protein belongs to the beta-catenin family. Two separate complex-associated pools are found in the cytoplasm. The majority is present as component of an E-cadherin/ catenin adhesion complex composed of at least E-cadherin/CDH1 and beta-catenin/CTNNB1, and possibly alpha-catenin/CTNNA1; the complex is located to adherens junctions. The stable association of CTNNA1 is controversial as CTNNA1 was shown not to bind to F-actin when assembled in the complex. Alternatively, the CTNNA1-containing complex may be linked to F-actin by other proteins such as LIMA1. Binds NHERF1. Interacts with PTPRU (via the cytoplasmic juxtamembrane domain) and with EMD. Interacts with SESTD1 and TRPC4. Interacts with CAV1. Interacts with PTPRJ. Interacts with PKT7. Interacts with FAT1 (via the cytoplasmic domain). Interacts with CDK2, NDRG2 and NANOS1. Interacts with NEK2 and CDK5. Interacts with CARM1, CXADR, PCDH11Y and PTK6. Interacts with RAPGEF2. Interacts with SOX7; this interaction may lead to proteasomal degradation of active CTNNB1 and thus inhibition of Wnt/beta-catenin-stimulated transcription. Identified in a complex with HINT1 and MITF. Interacts with FHIT. Interacts with FERMT2. Identified in a complex with TCF4 and FERMT2. Another cytoplasmic pool is part of a large complex containing AXIN1, AXIN2, APC, CSNK1A1 and GSK3B that promotes phosphorylation on N-terminal Ser and Thr residues and ubiquitination of CTNNB1 via BTRC and its subsequent degradation by the proteasome. Wnt-dependent activation of DVL antagonizes the action of GSK3B. When GSK3B activity is inhibited the complex dissociates, CTNNB1 is dephosphorylated and is no longer targeted for destruction. The stabilized protein translocates to the nucleus, where it binds TCF/LEF-1 family members, BCL9, BCL9L and possibly also RUVBL1 and CHD8. Interacts with TAX1BP3 (via the PDZ domain); this interaction inhibits the transcriptional activity of CTNNB1. Interacts with AJAP1, BAIAP1 and CTNNA3. Interacts with TRPV4; the TRPV4 and CTNNB1 complex can interact with CDH1. Interacts with VCL. The CTNNB1 and TCF4 complex interacts with PML. Interacts with XIRP1. Binds CTNNBIP and EP300. CTNNB1 forms a ternary complex with LEF1 and EP300 that is disrupted by CTNNBIP1 binding. Interacts directly with AXIN1; the interaction is regulated by CDK2 phosphorylation of AXIN1. Interacts with GLIS2. Interacts with SCRIB. Interacts with TNIK and TCF7L2. Interacts with SLC30A9. Interacts with RORA. May interact with P-cadherin/CDH3. Interacts with RNF220. Interacts with CTNND2. Interacts (via the C-terminal region) with CBY1. The complex composed, at least, of APC, CTNNB1 and GSK3B interacts with JPT1; the interaction requires the inactive form of GSK3B (phosphorylated at 'Ser-9'). Interacts with DLG5. Interacts with FAM53B; promoting translocation to the nucleus. Interacts with TMEM170B. Interacts with AHI1. Interacts with GID8. Component of an cadherin:catenin adhesion complex composed of at least of CDH26, beta-catenin/CTNNB1, alpha-catenin/CTNNA1 and p120 catenin/CTNND1. Forms a complex comprising APPL1, RUVBL2, APPL2, HDAC1 and HDAC2. Interacts with IRF2BPL; mediates the ubiquitination and degradation of CTNNB1. Interacts with AMFR. Interacts with LMBR1L. Interacts with SOX30; prevents interaction of CTNNB1 with TCF7L2/TCF4 and leads to inhibition of Wnt signaling. Interacts with SOX9; inhibiting CTNNB1 activity by competing with the binding sites of TCF/LEF within CTNNB1, thereby inhibiting the Wnt signaling. Interacts with SPN/CD43 cytoplasmic tail. Interacts (when phosphorylated at Tyr-333) with isoform M2 of PKM (PKM2); promoting transcription activation. Interacts with PKP2 (via HEAD domain). Interacts with CDH1. Interacts (when unphosphorylated) with FLYWCH1, perhaps preventing interaction of CTNNB1 with TCF4, and thereby regulating transcription activation; phosphorylation of CTNNB1 may inhibit the interaction. Interacts (via the central armadillo domains) with probable transcriptional regulator ADNP (via N-terminal region); interaction is direct and stabilizes CTNNB1 by modulating its phosphorylation by glycogen synthase kinase-3 beta GSK3B. Interacts with NR5A2. Interacts with DSG2; the interaction promotes localization of CTNNB1 at cell junctions thus reducing its nuclear localization and subsequent transcription of CTNNB1/TCF-target genes. In terms of processing, phosphorylation at Ser-552 by AMPK promotes stabilization of the protein, enhancing TCF/LEF-mediated transcription. Phosphorylation by GSK3B requires prior phosphorylation of Ser-45 by another kinase. Phosphorylation proceeds then from Thr-41 to Ser-37 and Ser-33. Phosphorylated by NEK2. EGF stimulates tyrosine phosphorylation. Phosphorylated on Ser-33 and Ser-37 by HIPK2 and GSK3B, this phosphorylation triggers proteasomal degradation. Phosphorylation on Ser-191 and Ser-246 by CDK5. Phosphorylation by CDK2 regulates insulin internalization. Phosphorylation by PTK6 at Tyr-64, Tyr-142, Tyr-331 and/or Tyr-333 with the predominant site at Tyr-64 is not essential for inhibition of transcriptional activity. Phosphorylation by SRC at Tyr-333 promotes interaction with isoform M2 of PKM (PKM2); promoting transcription activation. Ubiquitinated by the SCF(BTRC) E3 ligase complex when phosphorylated by GSK3B, leading to its degradation. Ubiquitinated by a E3 ubiquitin ligase complex containing UBE2D1, SIAH1, CACYBP/SIP, SKP1, APC and TBL1X, leading to its subsequent proteasomal degradation. Ubiquitinated and degraded following interaction with SOX9. Ubiquitinated via 'Lys-11'- and 'Lys-29'-linked ubiquitin chains by UBR5, leading to its stabilization. Post-translationally, S-nitrosylation at Cys-619 within adherens junctions promotes VEGF-induced, NO-dependent endothelial cell permeability by disrupting interaction with E-cadherin, thus mediating disassembly adherens junctions. In terms of processing, O-glycosylation at Ser-23 decreases nuclear localization and transcriptional activity, and increases localization to the plasma membrane and interaction with E-cadherin CDH1. Deacetylated at Lys-49 by SIRT1. In terms of tissue distribution, expressed in cerebellar granule neurons (at protein level). Expressed in the intestinal epithelium (at protein level). Abundantly expressed in the tooth, skin, lung, kidney, eye and brain with weak expression in the liver and heart.

The protein localises to the cytoplasm. Its subcellular location is the nucleus. It is found in the cytoskeleton. It localises to the cell junction. The protein resides in the adherens junction. The protein localises to the cell membrane. Its subcellular location is the microtubule organizing center. It is found in the centrosome. It localises to the spindle pole. The protein resides in the synapse. The protein localises to the cilium basal body. Key downstream component of the canonical Wnt signaling pathway. In the absence of Wnt, forms a complex with AXIN1, AXIN2, APC, CSNK1A1 and GSK3B that promotes phosphorylation on N-terminal Ser and Thr residues and ubiquitination of CTNNB1 via BTRC and its subsequent degradation by the proteasome. In the presence of Wnt ligand, CTNNB1 is not ubiquitinated and accumulates in the nucleus, where it acts as a coactivator for transcription factors of the TCF/LEF family, leading to activate Wnt responsive genes. Also acts as a coactivator for other transcription factors, such as NR5A2. Promotes epithelial to mesenchymal transition/mesenchymal to epithelial transition (EMT/MET) via driving transcription of CTNNB1/TCF-target genes. Involved in the regulation of cell adhesion, as component of an E-cadherin:catenin adhesion complex. Acts as a negative regulator of centrosome cohesion. Involved in the CDK2/PTPN6/CTNNB1/CEACAM1 pathway of insulin internalization. Blocks anoikis of malignant kidney and intestinal epithelial cells and promotes their anchorage-independent growth by down-regulating DAPK2. Disrupts PML function and PML-NB formation by inhibiting RANBP2-mediated sumoylation of PML. Promotes neurogenesis by maintaining sympathetic neuroblasts within the cell cycle. Involved in chondrocyte differentiation via interaction with SOX9: SOX9-binding competes with the binding sites of TCF/LEF within CTNNB1, thereby inhibiting the Wnt signaling. Acts as a positive regulator of odontoblast differentiation during mesenchymal tooth germ formation, via promoting the transcription of differentiation factors such as LEF1, BMP2 and BMP4. Activity is repressed in a MSX1-mediated manner at the bell stage of mesenchymal tooth germ formation which prevents premature differentiation of odontoblasts. In Mus musculus (Mouse), this protein is Catenin beta-1.